The chain runs to 120 residues: Ribosome-binding factor A (120 aa).

This sequence belongs to the RbfA family. As to quaternary structure, monomer. Binds 30S ribosomal subunits, but not 50S ribosomal subunits or 70S ribosomes.

It is found in the cytoplasm. Its function is as follows. One of several proteins that assist in the late maturation steps of the functional core of the 30S ribosomal subunit. Associates with free 30S ribosomal subunits (but not with 30S subunits that are part of 70S ribosomes or polysomes). Required for efficient processing of 16S rRNA. May interact with the 5'-terminal helix region of 16S rRNA. In Chlorobaculum parvum (strain DSM 263 / NCIMB 8327) (Chlorobium vibrioforme subsp. thiosulfatophilum), this protein is Ribosome-binding factor A.